The following is a 418-amino-acid chain: Geranylgeranyl pyrophosphate synthase (418 aa).

The segment covering 51–64 (TSSTGIPTSLNATP) has biased composition (polar residues). The tract at residues 51 to 73 (TSSTGIPTSLNATPTKPVLRPVP) is disordered. K143, R146, and H175 together coordinate isopentenyl diphosphate. Mg(2+) is bound by residues D182 and D186. R191 is a dimethylallyl diphosphate binding site. Isopentenyl diphosphate is bound at residue R192. The dimethylallyl diphosphate site is built by K269, T270, Q305, K322, and K332.

It belongs to the FPP/GGPP synthase family. Mg(2+) serves as cofactor.

The protein localises to the cytoplasm. It catalyses the reaction isopentenyl diphosphate + dimethylallyl diphosphate = (2E)-geranyl diphosphate + diphosphate. The enzyme catalyses isopentenyl diphosphate + (2E)-geranyl diphosphate = (2E,6E)-farnesyl diphosphate + diphosphate. The catalysed reaction is isopentenyl diphosphate + (2E,6E)-farnesyl diphosphate = (2E,6E,10E)-geranylgeranyl diphosphate + diphosphate. It participates in isoprenoid biosynthesis; farnesyl diphosphate biosynthesis; farnesyl diphosphate from geranyl diphosphate and isopentenyl diphosphate: step 1/1. The protein operates within isoprenoid biosynthesis; geranyl diphosphate biosynthesis; geranyl diphosphate from dimethylallyl diphosphate and isopentenyl diphosphate: step 1/1. Its pathway is isoprenoid biosynthesis; geranylgeranyl diphosphate biosynthesis; geranylgeranyl diphosphate from farnesyl diphosphate and isopentenyl diphosphate: step 1/1. Catalyzes the trans-addition of the three molecules of IPP onto DMAPP to form geranylgeranyl pyrophosphate. This chain is Geranylgeranyl pyrophosphate synthase (GGS), found in Fusarium fujikuroi (Bakanae and foot rot disease fungus).